The following is a 423-amino-acid chain: ER-bound oxygenase mpaB' (423 aa).

The Lumenal segment spans residues 1 to 22; sequence MSLSLPPALSELARALPYSRTQ. The chain crosses the membrane as a helical span at residues 23–41; sequence WLPILVGFLIGYPLLIKAL. Topologically, residues 42-423 are cytoplasmic; it reads RYKRLGEMKK…ISRTGKCPFH (382 aa).

It belongs to the mpaB oxygenase family.

It localises to the endoplasmic reticulum membrane. The catalysed reaction is 4-farnesyl-3,5-dihydroxy-6-methylphthalide + AH2 + 2 O2 = (4E,8E)-10-(4,6-dihydroxy-7-methyl-3-oxo-1,3-dihydro-2-benzofuran-5-yl)-4,8-dimethyldeca-4,8-dienoate + acetone + A + H2O + H(+). The protein operates within secondary metabolite biosynthesis; terpenoid biosynthesis. Its function is as follows. ER-bound oxygenase; part of the gene cluster that mediates the biosynthesis of mycophenolic acid (MPA), the first isolated antibiotic natural product in the world obtained from a culture of Penicillium brevicompactum in 1893. MpaB' catalyzes the oxidative cleavage the C19-C20 double bond in farnesyl-DHMP (FDHMP) to yield FDHMP-3C via a mycophenolic aldehyde intermediate. The first step of the pathway is the synthesis of 5-methylorsellinic acid (5MOA) by the cytosolic polyketide synthase mpaC. 5MOA is then converted to the phthalide compound 5,7-dihydroxy-4,6-dimethylphthalide (DHMP) by the endoplasmic reticulum-bound cytochrome P450 monooxygenase mpaDE. MpaDE first catalyzes hydroxylation of 5-MOA to 4,6-dihydroxy-2-(hydroxymethyl)-3-methylbenzoic acid (DHMB). MpaDE then acts as a lactone synthase that catalyzes the ring closure to convert DHMB into DHMP. The next step is the prenylation of DHMP by the Golgi apparatus-associated prenyltransferase mpaA to yield farnesyl-DHMP (FDHMP). The ER-bound oxygenase mpaB then mediates the oxidative cleavage the C19-C20 double bond in FDHMP to yield FDHMP-3C via a mycophenolic aldehyde intermediate. The O-methyltransferase mpaG catalyzes the methylation of FDHMP-3C to yield MFDHMP-3C. After the cytosolic methylation of FDHMP-3C, MFDHMP-3C enters into peroxisomes probably via free diffusion due to its low molecular weight. Upon a peroxisomal CoA ligation reaction, catalyzed by a beta-oxidation component enzyme acyl-CoA ligase ACL891, MFDHMP-3C-CoA would then be restricted to peroxisomes for the following beta-oxidation pathway steps. The peroxisomal beta-oxidation machinery than converts MFDHMP-3C-CoA into MPA_CoA, via a beta-oxidation chain-shortening process. Finally mpaH acts as a peroxisomal acyl-CoA hydrolase with high substrate specificity toward MPA-CoA to release the final product MPA. The chain is ER-bound oxygenase mpaB' from Penicillium brevicompactum.